A 334-amino-acid polypeptide reads, in one-letter code: Flavonol synthase/flavanone 3-hydroxylase (334 aa).

The Fe2OG dioxygenase domain maps to 196–295; that stretch reads DLVYLMKINY…RMSWPVFLEP (100 aa). Positions 220, 222, and 276 each coordinate Fe cation.

Belongs to the iron/ascorbate-dependent oxidoreductase family. Requires Fe cation as cofactor. L-ascorbate serves as cofactor.

Its subcellular location is the cytoplasm. It catalyses the reaction a (2R,3R)-dihydroflavonol + 2-oxoglutarate + O2 = a flavonol + succinate + CO2 + H2O. The catalysed reaction is a (2S)-flavan-4-one + 2-oxoglutarate + O2 = a (2R,3R)-dihydroflavonol + succinate + CO2. It participates in secondary metabolite biosynthesis; flavonoid biosynthesis. Its function is as follows. Catalyzes the formation of flavonols from dihydroflavonols. It can act on dihydrokaempferol to produce kaempferol, on dihydroquercetin to produce quercitin and on dihydromyricetin to produce myricetin. The protein is Flavonol synthase/flavanone 3-hydroxylase (FLS) of Eustoma exaltatum subsp. russellianum (Bluebells).